The primary structure comprises 392 residues: Major outer membrane protein P.IA (392 aa).

The first 19 residues, 1-19, serve as a signal peptide directing secretion; sequence MRKKLTALVLSALPLAAVA.

The protein belongs to the Gram-negative porin family. In terms of assembly, homotrimer.

The protein resides in the cell outer membrane. In terms of biological role, serves as a slightly cation selective porin. Major antigen on the gonococcal cell surface and it may have pathogenic properties in addition to its porin activity. This Neisseria meningitidis serogroup B (strain ATCC BAA-335 / MC58) protein is Major outer membrane protein P.IA (porA).